We begin with the raw amino-acid sequence, 740 residues long: Transcription activator of gluconeogenesis NCU03938 (740 aa).

A disordered region spans residues 1–66 (MPDDVGPAEA…KYDPKDPLRP (66 aa)). The segment covering 19–37 (SDNEYDETEVTTKDDDDEK) has biased composition (acidic residues). The span at 52 to 65 (GDQKKKYDPKDPLR) shows a compositional bias: basic and acidic residues. A DNA-binding region (zn(2)-C6 fungal-type) is located at residues 75–103 (CYACQRAHLTCGDERPCQRCIKRGLAEAC). Disordered regions lie at residues 333–405 (PAGP…RQRD), 532–579 (NSDT…KEQP), and 639–674 (APTA…PTGV). Polar residues predominate over residues 337–351 (TSLQSPSTENNSPQP). The region spanning 475–546 (ALFEHEEFMH…SISSKGGRGG (72 aa)) is the PAS domain. Low complexity predominate over residues 639-658 (APTASGGSGSSNGTVVNGGP).

Belongs to the ERT1/acuK family.

Its subcellular location is the nucleus. In terms of biological role, transcription factor which regulates nonfermentable carbon utilization. Activator of gluconeogenetic genes. This Neurospora crassa (strain ATCC 24698 / 74-OR23-1A / CBS 708.71 / DSM 1257 / FGSC 987) protein is Transcription activator of gluconeogenesis NCU03938.